The primary structure comprises 117 residues: UPF0344 protein GTNG_0604 (117 aa).

The next 4 membrane-spanning stretches (helical) occupy residues 1–21 (MTHA…IAVS), 39–59 (LFYI…ASIS), 61–81 (LYWL…MVLV), and 97–117 (VIAL…FDLF).

This sequence belongs to the UPF0344 family.

The protein resides in the cell membrane. The protein is UPF0344 protein GTNG_0604 of Geobacillus thermodenitrificans (strain NG80-2).